A 548-amino-acid chain; its full sequence is Probable malate:quinone oxidoreductase (548 aa).

The disordered stretch occupies residues 521–548 (DKPQAADSTPKPQLKPKPVQKEVADIAL). Over residues 539–548 (VQKEVADIAL) the composition is skewed to basic and acidic residues.

It belongs to the MQO family. The cofactor is FAD.

The enzyme catalyses (S)-malate + a quinone = a quinol + oxaloacetate. The protein operates within carbohydrate metabolism; tricarboxylic acid cycle; oxaloacetate from (S)-malate (quinone route): step 1/1. In Escherichia coli (strain ATCC 8739 / DSM 1576 / NBRC 3972 / NCIMB 8545 / WDCM 00012 / Crooks), this protein is Probable malate:quinone oxidoreductase.